The chain runs to 182 residues: Protein GrpE (182 aa).

This sequence belongs to the GrpE family. In terms of assembly, homodimer.

The protein localises to the cytoplasm. In terms of biological role, participates actively in the response to hyperosmotic and heat shock by preventing the aggregation of stress-denatured proteins, in association with DnaK and GrpE. It is the nucleotide exchange factor for DnaK and may function as a thermosensor. Unfolded proteins bind initially to DnaJ; upon interaction with the DnaJ-bound protein, DnaK hydrolyzes its bound ATP, resulting in the formation of a stable complex. GrpE releases ADP from DnaK; ATP binding to DnaK triggers the release of the substrate protein, thus completing the reaction cycle. Several rounds of ATP-dependent interactions between DnaJ, DnaK and GrpE are required for fully efficient folding. The polypeptide is Protein GrpE (Aquifex aeolicus (strain VF5)).